Consider the following 287-residue polypeptide: Melatonin receptor type 1B-A (287 aa).

The Extracellular segment spans residues 1 to 28; the sequence is MPENVSLIRNRTEVGQGRAWGSGAGARP. 2 N-linked (GlcNAc...) asparagine glycosylation sites follow: asparagine 4 and asparagine 10. The helical transmembrane segment at 29 to 49 threads the bilayer; it reads AWVVMVLAGVLIFTSVVDVLG. The Cytoplasmic portion of the chain corresponds to 50–69; sequence NVLVIISVLRNRKLRNAGNA. A helical transmembrane segment spans residues 70 to 90; the sequence is FVVSLAFADLLVVCYPYPLVL. The Extracellular portion of the chain corresponds to 91–107; the sequence is HAMLHAGWLPGEMECKV. Cysteine 105 and cysteine 182 form a disulfide bridge. Residues 108–128 traverse the membrane as a helical segment; it reads SGFLMGASVIGSIFNITAIAI. Residues 129-149 are Cytoplasmic-facing; that stretch reads NRYCFICQANTYEKIYGRAGT. A helical membrane pass occupies residues 150–170; that stretch reads LVLLTLVWVLTAIAILPNLSL. Topologically, residues 171 to 192 are extracellular; the sequence is GSLTYDPRVYSCTFSQTTSAGY. Residues 193 to 213 traverse the membrane as a helical segment; it reads TIAVVTVHFLLPIAVVTFCYL. Topologically, residues 214–245 are cytoplasmic; sequence RIWVLVLRVRRRVTTDVRPRLRPSELRHFLTM. The chain crosses the membrane as a helical span at residues 246 to 266; the sequence is FVVFVLFAVCWAPLNLIGLAV. The Extracellular portion of the chain corresponds to 267-275; that stretch reads AVDPPRVGP. A helical membrane pass occupies residues 276–287; it reads LVPDWLFVMSYF.

Belongs to the G-protein coupled receptor 1 family.

It is found in the cell membrane. Its function is as follows. High affinity receptor for melatonin. The activity of this receptor is mediated by pertussis toxin sensitive G proteins that inhibits adenylate cyclase activity. This chain is Melatonin receptor type 1B-A (mtnr1ba), found in Danio rerio (Zebrafish).